A 213-amino-acid chain; its full sequence is Leucyl/phenylalanyl-tRNA--protein transferase (213 aa).

This sequence belongs to the L/F-transferase family.

It localises to the cytoplasm. The enzyme catalyses N-terminal L-lysyl-[protein] + L-leucyl-tRNA(Leu) = N-terminal L-leucyl-L-lysyl-[protein] + tRNA(Leu) + H(+). The catalysed reaction is N-terminal L-arginyl-[protein] + L-leucyl-tRNA(Leu) = N-terminal L-leucyl-L-arginyl-[protein] + tRNA(Leu) + H(+). It catalyses the reaction L-phenylalanyl-tRNA(Phe) + an N-terminal L-alpha-aminoacyl-[protein] = an N-terminal L-phenylalanyl-L-alpha-aminoacyl-[protein] + tRNA(Phe). Functions in the N-end rule pathway of protein degradation where it conjugates Leu, Phe and, less efficiently, Met from aminoacyl-tRNAs to the N-termini of proteins containing an N-terminal arginine or lysine. The polypeptide is Leucyl/phenylalanyl-tRNA--protein transferase (Rhodospirillum rubrum (strain ATCC 11170 / ATH 1.1.1 / DSM 467 / LMG 4362 / NCIMB 8255 / S1)).